The following is a 154-amino-acid chain: Myoglobin (154 aa).

One can recognise a Globin domain in the interval 2–148 (GLSDGEWQLV…FRNDIAAKYK (147 aa)). Position 4 is a phosphoserine (Ser4). Residue His65 participates in nitrite binding. His65 lines the O2 pocket. Thr68 bears the Phosphothreonine mark. His94 serves as a coordination point for heme b.

This sequence belongs to the globin family. Monomeric.

It is found in the cytoplasm. It localises to the sarcoplasm. The enzyme catalyses Fe(III)-heme b-[protein] + nitric oxide + H2O = Fe(II)-heme b-[protein] + nitrite + 2 H(+). It catalyses the reaction H2O2 + AH2 = A + 2 H2O. Monomeric heme protein which primary function is to store oxygen and facilitate its diffusion within muscle tissues. Reversibly binds oxygen through a pentacoordinated heme iron and enables its timely and efficient release as needed during periods of heightened demand. Depending on the oxidative conditions of tissues and cells, and in addition to its ability to bind oxygen, it also has a nitrite reductase activity whereby it regulates the production of bioactive nitric oxide. Under stress conditions, like hypoxia and anoxia, it also protects cells against reactive oxygen species thanks to its pseudoperoxidase activity. The chain is Myoglobin (MB) from Proechimys guairae (Guaira spiny rat).